The following is a 503-amino-acid chain: Dentin matrix acidic phosphoprotein 1 (503 aa).

The first 16 residues, 1 to 16 (MKTVILLVFLWGLSCA), serve as a signal peptide directing secretion. Residues 23–35 (HNTESESSEERTG) are compositionally biased toward basic and acidic residues. A disordered region spans residues 23 to 503 (HNTESESSEE…QDDNDCQDGY (481 aa)). The span at 54–63 (QASPEGQANS) shows a compositional bias: polar residues. Acidic residues predominate over residues 98–119 (KEDDEDDSGDDTFGDEDNDLGP). The span at 138–150 (DTTQSSEDSTSQE) shows a compositional bias: low complexity. The segment covering 158–175 (SDSKDHDSEDEADSRPEA) has biased composition (basic and acidic residues). Over residues 203–215 (SEFDDEGMQSDDP) the composition is skewed to acidic residues. 3 stretches are compositionally biased toward basic and acidic residues: residues 233-243 (RSEESKGDHEP), 267-286 (HVSE…RETQ), and 293-303 (TASKEESRSES). Over residues 332–348 (EPSQESSSESQEGVTSE) the composition is skewed to low complexity. Residues 350-352 (RGD) carry the Cell attachment site motif. Asn356 carries N-linked (GlcNAc...) asparagine glycosylation. The segment covering 362 to 373 (DQEDSESSEEDS) has biased composition (acidic residues). Asn394 is a glycosylation site (N-linked (GlcNAc...) asparagine). Residues 407–418 (AQDGDSSSQEGL) are compositionally biased toward polar residues. Positions 419–435 (QSQSASTESRSQESQSE) are enriched in low complexity. Asn457 is a glycosylation site (N-linked (GlcNAc...) asparagine). Residues 467 to 492 (EDIRPKNMEADSRKLIVDAYHNKPIG) show a composition bias toward basic and acidic residues. The span at 493-503 (DQDDNDCQDGY) shows a compositional bias: acidic residues.

In terms of assembly, interacts with importin alpha. Post-translationally, phosphorylated in the cytosol and extracellular matrix and unphosphorylated in the nucleus. Phosphorylation is necessary for nucleocytoplasmic transport and may be catalyzed by a nuclear isoform of CK2 and can be augmented by calcium. Phosphorylated (in vitro) by FAM20C in the extracellular medium at sites within the S-x-E/pS motif. As to expression, expressed in tooth particularly in odontoblast, ameloblast and cementoblast. Also expressed in bone particularly in osteoblast.

The protein localises to the nucleus. The protein resides in the cytoplasm. It is found in the secreted. It localises to the extracellular space. Its subcellular location is the extracellular matrix. Its function is as follows. May have a dual function during osteoblast differentiation. In the nucleus of undifferentiated osteoblasts, unphosphorylated form acts as a transcriptional component for activation of osteoblast-specific genes like osteocalcin. During the osteoblast to osteocyte transition phase it is phosphorylated and exported into the extracellular matrix, where it regulates nucleation of hydroxyapatite. This Mus musculus (Mouse) protein is Dentin matrix acidic phosphoprotein 1.